The chain runs to 446 residues: Dual specificity mitogen-activated protein kinase kinase 2 (446 aa).

Residues 27 to 42 are compositionally biased toward low complexity; sequence SSGSSAGLGFQGQSQQ. The interval 27 to 51 is disordered; sequence SSGSSAGLGFQGQSQQHSTVNSMQG. Residues 149 to 414 enclose the Protein kinase domain; it reads LKDLGEIGRG…YKELLKHPFI (266 aa). ATP-binding positions include 155-163 and lysine 178; that span reads IGRGAYGSV. Aspartate 276 acts as the Proton acceptor in catalysis. A Phosphoserine; by RAF modification is found at serine 304. Phosphothreonine; by RAF is present on threonine 308.

The protein belongs to the protein kinase superfamily. STE Ser/Thr protein kinase family. MAP kinase kinase subfamily. MAPKK is itself dependent on Ser/Thr phosphorylation for activity catalyzed by MAP kinase kinase kinases. In terms of tissue distribution, expressed abundantly in the adult brain and muscle.

The catalysed reaction is L-seryl-[protein] + ATP = O-phospho-L-seryl-[protein] + ADP + H(+). The enzyme catalyses L-threonyl-[protein] + ATP = O-phospho-L-threonyl-[protein] + ADP + H(+). It carries out the reaction L-tyrosyl-[protein] + ATP = O-phospho-L-tyrosyl-[protein] + ADP + H(+). In terms of biological role, catalyzes the concomitant phosphorylation of a threonine and a tyrosine residue in a Thr-Glu-Tyr sequence located in MAP kinases. This Xenopus laevis (African clawed frog) protein is Dual specificity mitogen-activated protein kinase kinase 2 (map2k2).